The chain runs to 188 residues: Methylated-DNA--protein-cysteine methyltransferase (188 aa).

Positions 120, 121, and 134 each coordinate DNA. The Nucleophile; methyl group acceptor role is filled by C151. Position 157 (S157) interacts with DNA.

It belongs to the MGMT family.

The protein localises to the nucleus. The enzyme catalyses a 6-O-methyl-2'-deoxyguanosine in DNA + L-cysteinyl-[protein] = S-methyl-L-cysteinyl-[protein] + a 2'-deoxyguanosine in DNA. It carries out the reaction a 4-O-methyl-thymidine in DNA + L-cysteinyl-[protein] = a thymidine in DNA + S-methyl-L-cysteinyl-[protein]. Involved in the cellular defense against the biological effects of O6-methylguanine (O6-MeG) and O4-methylthymine (O4-MeT) in DNA. Repairs the methylated nucleobase in DNA by stoichiometrically transferring the methyl group to a cysteine residue in the enzyme. This is a suicide reaction: the enzyme is irreversibly inactivated. Prefers double-stranded DNA over single-stranded DNA as substrate. The polypeptide is Methylated-DNA--protein-cysteine methyltransferase (MGT1) (Saccharomyces cerevisiae (strain YJM789) (Baker's yeast)).